A 514-amino-acid polypeptide reads, in one-letter code: Na(+)/H(+) antiporter NhaB (514 aa).

The next 12 helical transmembrane spans lie at 23-43, 63-83, 97-117, 120-140, 144-164, 202-222, 238-258, 303-323, 357-377, 391-411, 447-467, and 475-495; these read LALL…PFVA, PLLP…TSAA, LLLM…LFIF, LLLS…AAAF, FLDA…FYGI, LMMH…VGEP, FFLR…LTCM, AVIG…VGLI, LTVF…APII, LFYL…VGTI, ATPN…APLI, and VWMA…CVEF.

This sequence belongs to the NhaB Na(+)/H(+) (TC 2.A.34) antiporter family.

It localises to the cell inner membrane. It catalyses the reaction 2 Na(+)(in) + 3 H(+)(out) = 2 Na(+)(out) + 3 H(+)(in). Its function is as follows. Na(+)/H(+) antiporter that extrudes sodium in exchange for external protons. The protein is Na(+)/H(+) antiporter NhaB of Salmonella agona (strain SL483).